A 262-amino-acid chain; its full sequence is Putative hydro-lyase ROP_32680 (262 aa).

Belongs to the D-glutamate cyclase family.

The protein is Putative hydro-lyase ROP_32680 of Rhodococcus opacus (strain B4).